The sequence spans 384 residues: D-alanine--D-alanine ligase (384 aa).

An ATP-grasp domain is found at 167–374 (KKLFAAEGLP…YPTLLATMVD (208 aa)). 195–250 (CERLSLPVFVKPARGGSSIGISRVSSWGQLPSAIAYARRHDPKVIVEAAVNGRELE) contacts ATP. 3 residues coordinate Mg(2+): D329, E341, and N343.

The protein belongs to the D-alanine--D-alanine ligase family. Mg(2+) is required as a cofactor. The cofactor is Mn(2+).

The protein resides in the cytoplasm. The enzyme catalyses 2 D-alanine + ATP = D-alanyl-D-alanine + ADP + phosphate + H(+). It functions in the pathway cell wall biogenesis; peptidoglycan biosynthesis. Cell wall formation. This chain is D-alanine--D-alanine ligase, found in Mycobacterium leprae (strain TN).